An 86-amino-acid polypeptide reads, in one-letter code: Ferredoxin-like protein YgcO (86 aa).

The 4Fe-4S ferredoxin-type domain occupies 45 to 74 (GNLRIDYRSCLECGTCRLLCDESTLQQWRY).

This sequence belongs to the bacterial-type ferredoxin family. FixX subfamily.

In terms of biological role, could be a 3Fe-4S cluster-containing protein. Probably participates in a redox process with YgcN, YgcQ and YgcR. This is Ferredoxin-like protein YgcO (ygcO) from Escherichia coli (strain K12).